A 452-amino-acid chain; its full sequence is UPF0210 protein Hore_14430 (452 aa).

Belongs to the UPF0210 family. Homodimer.

This Halothermothrix orenii (strain H 168 / OCM 544 / DSM 9562) protein is UPF0210 protein Hore_14430.